The following is a 475-amino-acid chain: Glycogen synthase (475 aa).

Lysine 15 is an ADP-alpha-D-glucose binding site.

Belongs to the glycosyltransferase 1 family. Bacterial/plant glycogen synthase subfamily.

It carries out the reaction [(1-&gt;4)-alpha-D-glucosyl](n) + ADP-alpha-D-glucose = [(1-&gt;4)-alpha-D-glucosyl](n+1) + ADP + H(+). The protein operates within glycan biosynthesis; glycogen biosynthesis. Synthesizes alpha-1,4-glucan chains using ADP-glucose. This chain is Glycogen synthase, found in Kosmotoga olearia (strain ATCC BAA-1733 / DSM 21960 / TBF 19.5.1).